We begin with the raw amino-acid sequence, 99 residues long: Large ribosomal subunit protein eL42 (99 aa).

The protein belongs to the eukaryotic ribosomal protein eL42 family.

The chain is Large ribosomal subunit protein eL42 (RPL44) from Chlamydomonas reinhardtii (Chlamydomonas smithii).